Consider the following 590-residue polypeptide: Mitochondrial distribution and morphology protein 34 (590 aa).

Residues 1 to 225 (MSFIFNRETF…LPSVIFNMSQ (225 aa)) form the SMP-LTD domain. Residues 393–405 (RRKIKMRSRKPSK) are compositionally biased toward basic residues. The disordered stretch occupies residues 393–456 (RRKIKMRSRK…APEGGPNAED (64 aa)). A compositionally biased stretch (polar residues) spans 413-427 (PAQNDSGTSSCSNVA).

The protein belongs to the MDM34 family. As to quaternary structure, component of the ER-mitochondria encounter structure (ERMES) or MDM complex, composed of MMM1, MDM10, MDM12 and MDM34.

Its subcellular location is the mitochondrion outer membrane. In terms of biological role, component of the ERMES/MDM complex, which serves as a molecular tether to connect the endoplasmic reticulum (ER) and mitochondria. Components of this complex are involved in the control of mitochondrial shape and protein biogenesis, and function in nonvesicular lipid trafficking between the ER and mitochondria. MDM34 is required for the interaction of the ER-resident membrane protein MMM1 and the outer mitochondrial membrane-resident beta-barrel protein MDM10. This chain is Mitochondrial distribution and morphology protein 34, found in Eremothecium gossypii (strain ATCC 10895 / CBS 109.51 / FGSC 9923 / NRRL Y-1056) (Yeast).